A 205-amino-acid polypeptide reads, in one-letter code: Probable anaerobic dimethyl sulfoxide reductase chain YnfG (205 aa).

4Fe-4S ferredoxin-type domains follow at residues 5–33 (YGFF…LGPE), 59–89 (FAYY…KRED), and 90–119 (GFVV…YNAE). [4Fe-4S] cluster is bound by residues Cys14, Cys17, Cys20, Cys24, Cys67, Cys70, Cys75, Cys79, Cys99, Cys102, Cys105, Cys109, Cys126, Cys129, Cys141, and Cys145. The tract at residues 183–205 (IKPNANSRPTGDTTGYLANPEEV) is disordered. Positions 186–195 (NANSRPTGDT) are enriched in polar residues.

As to quaternary structure, the complex consists of three subunits: YnfF, the reductase; YnfG, an electron transfer protein, and YnfH, a membrane anchor protein. It depends on [4Fe-4S] cluster as a cofactor.

Functionally, electron transfer subunit of the terminal reductase during anaerobic growth on various sulfoxide and N-oxide compounds. The sequence is that of Probable anaerobic dimethyl sulfoxide reductase chain YnfG (ynfG) from Escherichia coli O6:H1 (strain CFT073 / ATCC 700928 / UPEC).